The primary structure comprises 314 residues: Homoserine O-acetyltransferase (314 aa).

Cys-142 functions as the Acyl-thioester intermediate in the catalytic mechanism. Lys-163 and Ser-192 together coordinate substrate. His-235 serves as the catalytic Proton acceptor. Glu-237 is an active-site residue. Arg-249 contacts substrate.

The protein belongs to the MetA family.

Its subcellular location is the cytoplasm. It carries out the reaction L-homoserine + acetyl-CoA = O-acetyl-L-homoserine + CoA. It functions in the pathway amino-acid biosynthesis; L-methionine biosynthesis via de novo pathway; O-acetyl-L-homoserine from L-homoserine: step 1/1. In terms of biological role, transfers an acetyl group from acetyl-CoA to L-homoserine, forming acetyl-L-homoserine. This chain is Homoserine O-acetyltransferase, found in Desulfovibrio desulfuricans (strain ATCC 27774 / DSM 6949 / MB).